Reading from the N-terminus, the 178-residue chain is Aspartate carbamoyltransferase regulatory chain (178 aa).

The span at 1 to 15 (MNDREPNQKESKESV) shows a compositional bias: basic and acidic residues. The interval 1-23 (MNDREPNQKESKESVNDAVPRAR) is disordered. Residues Cys133, Cys138, Cys159, and Cys162 each contribute to the Zn(2+) site.

The protein belongs to the PyrI family. In terms of assembly, contains catalytic and regulatory chains. Zn(2+) is required as a cofactor.

In terms of biological role, involved in allosteric regulation of aspartate carbamoyltransferase. In Haloquadratum walsbyi (strain DSM 16790 / HBSQ001), this protein is Aspartate carbamoyltransferase regulatory chain.